The chain runs to 552 residues: Chromosomal replication initiator protein DnaA (552 aa).

Positions 1 to 90 (MWNETWNEIT…FTVAVTVDPT (90 aa)) are domain I, interacts with DnaA modulators. A domain II region spans residues 90 to 210 (TLDVIQDLPH…KPAHDPDRNG (121 aa)). The tract at residues 113 to 213 (EHPHYSPVSQ…HDPDRNGSLN (101 aa)) is disordered. A compositionally biased stretch (low complexity) spans 155–170 (PQPSQSSQSAQQQPAQ). A domain III, AAA+ region region spans residues 211–427 (SLNPRYTFDT…GAFIRVSAYA (217 aa)). Positions 255, 257, 258, and 259 each coordinate ATP. The segment at 428–552 (SLNEAPINMA…TQQIKSSDRA (125 aa)) is domain IV, binds dsDNA.

It belongs to the DnaA family. Oligomerizes as a right-handed, spiral filament on DNA at oriC.

It is found in the cytoplasm. In terms of biological role, plays an essential role in the initiation and regulation of chromosomal replication. ATP-DnaA binds to the origin of replication (oriC) to initiate formation of the DNA replication initiation complex once per cell cycle. Binds the DnaA box (a 9 base pair repeat at the origin) and separates the double-stranded (ds)DNA. Forms a right-handed helical filament on oriC DNA; dsDNA binds to the exterior of the filament while single-stranded (ss)DNA is stabiized in the filament's interior. The ATP-DnaA-oriC complex binds and stabilizes one strand of the AT-rich DNA unwinding element (DUE), permitting loading of DNA polymerase. After initiation quickly degrades to an ADP-DnaA complex that is not apt for DNA replication. Binds acidic phospholipids. This chain is Chromosomal replication initiator protein DnaA, found in Corynebacterium diphtheriae (strain ATCC 700971 / NCTC 13129 / Biotype gravis).